The following is a 415-amino-acid chain: Lupus La protein homolog (415 aa).

An HTH La-type RNA-binding domain is found at 7–99 (NEKMTALEAK…RRSPSRPLPE (93 aa)). Phosphoserine occurs at positions 92 and 94. Residues 111 to 187 (RSVYIKGFPT…TNLLILFKED (77 aa)) enclose the RRM domain. Lys-116 bears the N6-acetyllysine mark. Thr-120 is subject to Phosphothreonine. N6-acetyllysine is present on residues Lys-128, Lys-327, and Lys-356. The xRRM domain maps to 226–346 (EGKMGCLLKF…GRFKGSHVFT (121 aa)). The interval 349-415 (RRFKGKGKGN…KKRENGARDK (67 aa)) is disordered. Phosphothreonine is present on Thr-377. Basic and acidic residues predominate over residues 377-415 (TRFDDDDRRRGPMKRGRDGRDREEPASKHKKRENGARDK).

As to quaternary structure, interacts with DDX15. May interact with RUFY1. In terms of processing, phosphorylated.

The protein resides in the nucleus. Its function is as follows. Binds to the 3' poly(U) terminus of nascent RNA polymerase III transcripts, protecting them from exonuclease digestion and facilitating their folding and maturation. The polypeptide is Lupus La protein homolog (Ssb) (Mus musculus (Mouse)).